Reading from the N-terminus, the 380-residue chain is MAKRDYYEILGVSKNATKEEIKKAYRKLSKKYHPDVNKEPDAAEKFKEIKEAYEVLSDDQKRAHYDQFGQADPNQGFGGFRSDDFDLGGFSGFGGFEDIFNTFFGGGRRRNPNAPRAGADLQYTMTLTFEEAAFGKETDIEIPSEETCNTCHGTGAKPGTKPETCPHCHGAGQISTEQSTPFGRIVNRRTCPYCGGTGQYIKEKCTTCGGTGRVKRRKKIHVKIPAGIDDGQQLRVAGQGERGLTVGRREIYILSFMWSRMSFLNVTAMIFIAKCRLRLRKLRLGMKSKSRPFTGKLKLKIPAGTQTGTRLRLKGKGVPNVRGYGYGDQHVIVRVVTPTKLTEKQKQLLREFDQLGGSSMHHEPHDRFFDKVKKAFKPES.

The J domain occupies 5-69 (DYYEILGVSK…QKRAHYDQFG (65 aa)). Residues 135–217 (GKETDIEIPS…CGGTGRVKRR (83 aa)) form a CR-type zinc finger. The Zn(2+) site is built by cysteine 148, cysteine 151, cysteine 165, cysteine 168, cysteine 191, cysteine 194, cysteine 205, and cysteine 208. CXXCXGXG motif repeat units lie at residues 148-155 (CNTCHGTG), 165-172 (CPHCHGAG), 191-198 (CPYCGGTG), and 205-212 (CTTCGGTG).

It belongs to the DnaJ family. As to quaternary structure, homodimer. Zn(2+) is required as a cofactor.

Its subcellular location is the cytoplasm. Participates actively in the response to hyperosmotic and heat shock by preventing the aggregation of stress-denatured proteins and by disaggregating proteins, also in an autonomous, DnaK-independent fashion. Unfolded proteins bind initially to DnaJ; upon interaction with the DnaJ-bound protein, DnaK hydrolyzes its bound ATP, resulting in the formation of a stable complex. GrpE releases ADP from DnaK; ATP binding to DnaK triggers the release of the substrate protein, thus completing the reaction cycle. Several rounds of ATP-dependent interactions between DnaJ, DnaK and GrpE are required for fully efficient folding. Also involved, together with DnaK and GrpE, in the DNA replication of plasmids through activation of initiation proteins. This chain is Chaperone protein DnaJ, found in Geobacillus stearothermophilus (Bacillus stearothermophilus).